A 323-amino-acid chain; its full sequence is MADGDSGSERGGSSGGPGGFSQHMSREQETQELATKRLDIQNKRFYLDVKQNAKGRFIKIAEVGAGGSKSRLTLSMGVAAEFRDYLGDFIEHYAQLGPSSPEQIAQASGEDGAGGPGGPRRALKSEFLVRENRKYYLDLKENQRGRFLRIRQTINRGPGFSGGAGGGAGLQSGQTIALPAQGLIEFRDALAKLIDDYGGEDDEGVGLGGAGGGGGGGMYGELPEGTSITVDSKRFFFDVGSNKYGVFLRVSEVKPSYRNSITVPLKAWGKFGGAFCRYSEEMKEIQERQRDKMYERRGPGDRERSLGPGGGGDDSETEDVDDD.

Disordered stretches follow at residues 1–34 (MADG…QELA), 100–122 (SPEQ…PRRA), and 286–323 (QERQ…VDDD). The residue at position 2 (alanine 2) is an N-acetylalanine. Gly residues predominate over residues 9–19 (ERGGSSGGPGG). Residues 24 to 34 (MSREQETQELA) are compositionally biased toward basic and acidic residues. The DNA-binding stretch occupies residues 27 to 257 (EQETQELATK…LRVSEVKPSY (231 aa)). Over residues 286-305 (QERQRDKMYERRGPGDRERS) the composition is skewed to basic and acidic residues. Positions 313 to 323 (DDSETEDVDDD) are enriched in acidic residues.

It belongs to the PUR DNA-binding protein family.

It is found in the nucleus. In terms of biological role, transcriptional regulator which can act as an activator or a repressor. In Xenopus laevis (African clawed frog), this protein is Transcriptional regulator protein Pur-beta-A (purb-a).